A 350-amino-acid chain; its full sequence is Protein RecA (350 aa).

Residue 65 to 72 (GPESSGKT) participates in ATP binding.

This sequence belongs to the RecA family.

It is found in the cytoplasm. Can catalyze the hydrolysis of ATP in the presence of single-stranded DNA, the ATP-dependent uptake of single-stranded DNA by duplex DNA, and the ATP-dependent hybridization of homologous single-stranded DNAs. It interacts with LexA causing its activation and leading to its autocatalytic cleavage. This is Protein RecA from Clostridium tetani (strain Massachusetts / E88).